Consider the following 438-residue polypeptide: Glutamyl-tRNA(Gln) amidotransferase subunit D (438 aa).

One can recognise an Asparaginase/glutaminase domain in the interval 92–422; the sequence is PEVTIIGTGG…EEVRKMMLTN (331 aa). Residues Thr102, Thr178, Asp179, and Lys256 contribute to the active site.

The protein belongs to the asparaginase 1 family. GatD subfamily. In terms of assembly, heterodimer of GatD and GatE.

The enzyme catalyses L-glutamyl-tRNA(Gln) + L-glutamine + ATP + H2O = L-glutaminyl-tRNA(Gln) + L-glutamate + ADP + phosphate + H(+). Its function is as follows. Allows the formation of correctly charged Gln-tRNA(Gln) through the transamidation of misacylated Glu-tRNA(Gln) in organisms which lack glutaminyl-tRNA synthetase. The reaction takes place in the presence of glutamine and ATP through an activated gamma-phospho-Glu-tRNA(Gln). The GatDE system is specific for glutamate and does not act on aspartate. The protein is Glutamyl-tRNA(Gln) amidotransferase subunit D of Pyrococcus abyssi (strain GE5 / Orsay).